Reading from the N-terminus, the 152-residue chain is Antiholin-like protein LrgA (152 aa).

The next 4 helical transmembrane spans lie at 23–43 (YSIFQQALTIAVILLISKIIE), 45–65 (FMPIPMPASVIGLVLLFIALC), 77–97 (VGTALTNNIGFLFVPAGISVI), and 108–128 (ILIILLIIISTLLLLICTGFS).

It belongs to the CidA/LrgA family. LrgA subfamily.

It localises to the cell membrane. Functionally, inhibits the expression or activity of extracellular murein hydrolases by interacting, possibly with LrgB, with the holin-like proteins CidA and/or CidB. The LrgAB and CidAB proteins may affect the proton motive force of the membrane. May be involved in programmed cell death (PCD), possibly triggering PCD in response to antibiotics and environmental stresses. In Staphylococcus epidermidis (strain ATCC 12228 / FDA PCI 1200), this protein is Antiholin-like protein LrgA.